The following is a 142-amino-acid chain: Hemoglobin subunit alpha-A (142 aa).

The 141-residue stretch at 2 to 142 folds into the Globin domain; that stretch reads VLSAADKTNV…VGAVLTAKYR (141 aa). His59 lines the O2 pocket. His88 contributes to the heme b binding site.

Belongs to the globin family. In terms of assembly, heterotetramer of two alpha chains and two beta chains. In terms of tissue distribution, red blood cells.

Involved in oxygen transport from the lung to the various peripheral tissues. The protein is Hemoglobin subunit alpha-A (HBAA) of Cairina moschata (Muscovy duck).